The chain runs to 134 residues: Large ribosomal subunit protein uL14 (134 aa).

Belongs to the universal ribosomal protein uL14 family. In terms of assembly, part of the 50S ribosomal subunit. Forms a cluster with proteins L3 and L19. In the 70S ribosome, L14 and L19 interact and together make contacts with the 16S rRNA in bridges B5 and B8.

Functionally, binds to 23S rRNA. Forms part of two intersubunit bridges in the 70S ribosome. The polypeptide is Large ribosomal subunit protein uL14 (Deinococcus geothermalis (strain DSM 11300 / CIP 105573 / AG-3a)).